A 141-amino-acid polypeptide reads, in one-letter code: Large ribosomal subunit protein uL11 (141 aa).

Belongs to the universal ribosomal protein uL11 family. As to quaternary structure, part of the ribosomal stalk of the 50S ribosomal subunit. Interacts with L10 and the large rRNA to form the base of the stalk. L10 forms an elongated spine to which L12 dimers bind in a sequential fashion forming a multimeric L10(L12)X complex. Post-translationally, one or more lysine residues are methylated.

Its function is as follows. Forms part of the ribosomal stalk which helps the ribosome interact with GTP-bound translation factors. In Listeria innocua serovar 6a (strain ATCC BAA-680 / CLIP 11262), this protein is Large ribosomal subunit protein uL11.